The chain runs to 310 residues: Upstream stimulatory factor 1 (310 aa).

The segment covering 1–17 has biased composition (polar residues); it reads MKGQQKTAETEEGTVQI. Disordered regions lie at residues 1–26 and 171–209; these read MKGQ…ATGE and QGGS…EVER. The segment covering 190–209 has biased composition (basic and acidic residues); that stretch reads EAPRTTRDEKRRAQHNEVER. In terms of domain architecture, bHLH spans 199–254; it reads KRRAQHNEVERRRRDKINNWIVQLSKIIPDCSMESTKSGQSKGGILSKACDYIQEL. The interval 271-292 is leucine-zipper; that stretch reads LQLDNDVLRQQVEDLKNKNLLL. K306 is covalently cross-linked (Glycyl lysine isopeptide (Lys-Gly) (interchain with G-Cter in SUMO2)).

As to quaternary structure, efficient DNA binding requires dimerization with another bHLH protein. Binds DNA as a homodimer or a heterodimer (USF1/USF2).

The protein localises to the nucleus. Its function is as follows. Transcription factor that binds to a symmetrical DNA sequence (E-boxes) (5'-CACGTG-3') that is found in a variety of viral and cellular promoters. This Mus musculus (Mouse) protein is Upstream stimulatory factor 1 (Usf1).